We begin with the raw amino-acid sequence, 988 residues long: Ephrin type-B receptor 3 (988 aa).

The tract at residues 1 to 24 (GVSSRARRPPGSSRSSRRGVTSEL) is disordered. At 1–534 (GVSSRARRPP…TSKTFQELPL (534 aa)) the chain is on the extracellular side. In terms of domain architecture, Eph LBD spans 11–189 (GSSRSSRRGV…FYKKCSNTIA (179 aa)). The cysteines at positions 53 and 171 are disulfide-linked. Fibronectin type-III domains lie at 311-424 (VPSA…TNQA) and 425-522 (APSA…TAED). 2 N-linked (GlcNAc...) asparagine glycosylation sites follow: Asn323 and Asn418. The helical transmembrane segment at 535–555 (IVGSATAGLLFVIVVVIIAIV) threads the bilayer. The Cytoplasmic portion of the chain corresponds to 556-988 (CFRKGMVTEQ…QMNQTLPVQV (433 aa)). Tyr604 is modified (phosphotyrosine; by autocatalysis). Residues 623–886 (VKIEEVIGAG…QIVNTLDKLI (264 aa)) enclose the Protein kinase domain. Residues 629–637 (IGAGEFGEV) and Lys655 each bind ATP. Catalysis depends on Asp748, which acts as the Proton acceptor. In terms of domain architecture, SAM spans 915 to 979 (TTFTTVGDWL…LSSIQDMRLQ (65 aa)). Positions 986–988 (VQV) match the PDZ-binding motif.

Belongs to the protein kinase superfamily. Tyr protein kinase family. Ephrin receptor subfamily. In terms of assembly, heterotetramer upon binding of the ligand. The heterotetramer is composed of an ephrin dimer and a receptor dimer. Oligomerization is probably required to induce biological responses. Post-translationally, phosphorylated. Autophosphorylates upon ligand-binding. Autophosphorylation on Tyr-604 is required for interaction with SH2 domain-containing proteins. In terms of tissue distribution, present in 10-day embryonic brain and body tissues. Prominent expression in kidney. Lower expression in lung, and barely detectable in brain, liver, heart, skeletal muscle and thymus.

The protein localises to the cell membrane. The protein resides in the cell projection. It localises to the dendrite. The catalysed reaction is L-tyrosyl-[protein] + ATP = O-phospho-L-tyrosyl-[protein] + ADP + H(+). Functionally, receptor tyrosine kinase which binds promiscuously transmembrane ephrin-B family ligands residing on adjacent cells, leading to contact-dependent bidirectional signaling into neighboring cells. The signaling pathway downstream of the receptor is referred to as forward signaling while the signaling pathway downstream of the ephrin ligand is referred to as reverse signaling. Generally has an overlapping and redundant function with EPHB2. Like EPHB2, functions in axon guidance during development. In addition to its role in axon guidance also plays an important redundant role with other ephrin-B receptors in development and maturation of dendritic spines and the formation of excitatory synapses. May control other aspects of development through regulation of cell migration and positioning. The protein is Ephrin type-B receptor 3 (EPHB3) of Gallus gallus (Chicken).